Reading from the N-terminus, the 291-residue chain is Ribosomal RNA small subunit methyltransferase H (291 aa).

Residues 36–38, Asp55, Ala90, Asp102, and Gln109 each bind S-adenosyl-L-methionine; that span reads GGH.

It belongs to the methyltransferase superfamily. RsmH family.

Its subcellular location is the cytoplasm. The enzyme catalyses cytidine(1402) in 16S rRNA + S-adenosyl-L-methionine = N(4)-methylcytidine(1402) in 16S rRNA + S-adenosyl-L-homocysteine + H(+). Its function is as follows. Specifically methylates the N4 position of cytidine in position 1402 (C1402) of 16S rRNA. This is Ribosomal RNA small subunit methyltransferase H from Thermosipho africanus (strain TCF52B).